Here is a 172-residue protein sequence, read N- to C-terminus: ATP synthase subunit b, chloroplastic (172 aa).

A helical membrane pass occupies residues Ile15 to Val37.

This sequence belongs to the ATPase B chain family. As to quaternary structure, F-type ATPases have 2 components, F(1) - the catalytic core - and F(0) - the membrane proton channel. F(1) has five subunits: alpha(3), beta(3), gamma(1), delta(1), epsilon(1). F(0) has four main subunits: a(1), b(1), b'(1) and c(10-14). The alpha and beta chains form an alternating ring which encloses part of the gamma chain. F(1) is attached to F(0) by a central stalk formed by the gamma and epsilon chains, while a peripheral stalk is formed by the delta, b and b' chains.

Its subcellular location is the plastid. It is found in the chloroplast thylakoid membrane. Its function is as follows. F(1)F(0) ATP synthase produces ATP from ADP in the presence of a proton or sodium gradient. F-type ATPases consist of two structural domains, F(1) containing the extramembraneous catalytic core and F(0) containing the membrane proton channel, linked together by a central stalk and a peripheral stalk. During catalysis, ATP synthesis in the catalytic domain of F(1) is coupled via a rotary mechanism of the central stalk subunits to proton translocation. Functionally, component of the F(0) channel, it forms part of the peripheral stalk, linking F(1) to F(0). In Pisum sativum (Garden pea), this protein is ATP synthase subunit b, chloroplastic.